We begin with the raw amino-acid sequence, 444 residues long: MFS-type transporter dbaD (444 aa).

A compositionally biased stretch (polar residues) spans 1–13; it reads MTEQPPQNHSVDL. The segment at 1–57 is disordered; the sequence is MTEQPPQNHSVDLNQNEDNNENDYRSSSATDAERPCEPKIEESTAKPPTGPPAPPPP. N-linked (GlcNAc...) asparagine glycosylation occurs at N8. Basic and acidic residues predominate over residues 31 to 44; sequence DAERPCEPKIEEST. A compositionally biased stretch (pro residues) spans 48–57; it reads PTGPPAPPPP. Transmembrane regions (helical) follow at residues 62–82, 107–127, 134–154, 159–179, 192–212, 223–243, 267–287, 301–323, 330–350, 356–376, and 394–414; these read LVAW…WGIM, WIGS…GSIY, ALLV…SLCK, VLLA…VPCV, TALG…PIVL, WSVR…IAVM, MAFT…LFYI, MAFY…PNAM, FNLI…LLAV, LIVI…LPPL, and MGFG…GAIL. N421 carries an N-linked (GlcNAc...) asparagine glycan. A helical membrane pass occupies residues 424 to 444; the sequence is GLWVYGGVTSLVAGFIICIAV.

This sequence belongs to the major facilitator superfamily. Monocarboxylate porter (TC 2.A.1.13) family.

It localises to the cell membrane. Its function is as follows. MFS-type transporter; part of the gene cluster that mediates the biosynthesis of the antibiotic 2,4- dihydroxy-3-methyl-6-(2-oxopropyl)benzaldehyde (DHMBA) and its derivatives. Is probably involved in the transport of the metabolites to the environment. The sequence is that of MFS-type transporter dbaD from Emericella nidulans (strain FGSC A4 / ATCC 38163 / CBS 112.46 / NRRL 194 / M139) (Aspergillus nidulans).